The chain runs to 372 residues: NAD(P)H-quinone oxidoreductase subunit 1 (372 aa).

8 consecutive transmembrane segments (helical) span residues 27 to 47 (AIWMPLPMFLMIIAATVGVLV), 97 to 117 (WLFLFGPILVVMPVFVSYLIV), 130 to 150 (VGIFLWISLSSIAPIGLLMAG), 176 to 196 (LALSVLAIVMMSNSLSTIDIV), 204 to 224 (ILGWNIWRQPVGFLIFWIAAL), 254 to 274 (FALFYVGSYVNLVLSALVFAV), 308 to 328 (SLGITMTVLKAYFLIFIAILL), and 351 to 371 (VSLVNLLLTAALKLAFPFAFG).

It belongs to the complex I subunit 1 family. NDH-1 is composed of at least 11 different subunits.

It localises to the cellular thylakoid membrane. It catalyses the reaction a plastoquinone + NADH + (n+1) H(+)(in) = a plastoquinol + NAD(+) + n H(+)(out). It carries out the reaction a plastoquinone + NADPH + (n+1) H(+)(in) = a plastoquinol + NADP(+) + n H(+)(out). Its function is as follows. NDH-1 shuttles electrons from an unknown electron donor, via FMN and iron-sulfur (Fe-S) centers, to quinones in the respiratory and/or the photosynthetic chain. The immediate electron acceptor for the enzyme in this species is believed to be plastoquinone. Couples the redox reaction to proton translocation, and thus conserves the redox energy in a proton gradient. The sequence is that of NAD(P)H-quinone oxidoreductase subunit 1 from Microcystis aeruginosa (strain NIES-843 / IAM M-2473).